Here is a 390-residue protein sequence, read N- to C-terminus: Transaldolase (390 aa).

Lys135 functions as the Schiff-base intermediate with substrate in the catalytic mechanism. 2 consecutive EF-hand domains span residues 329–364 (AFCH…FDAL) and 365–388 (DHDH…LALT). 10 residues coordinate Ca(2+): Asp342, Asp344, Asp346, Cys348, Glu353, Asp365, Asp367, Asp369, Arg371, and Asp376.

The protein belongs to the transaldolase family. Type 1 subfamily.

The protein resides in the cytoplasm. The enzyme catalyses D-sedoheptulose 7-phosphate + D-glyceraldehyde 3-phosphate = D-erythrose 4-phosphate + beta-D-fructose 6-phosphate. Its pathway is carbohydrate degradation; pentose phosphate pathway; D-glyceraldehyde 3-phosphate and beta-D-fructose 6-phosphate from D-ribose 5-phosphate and D-xylulose 5-phosphate (non-oxidative stage): step 2/3. In terms of biological role, transaldolase is important for the balance of metabolites in the pentose-phosphate pathway. The protein is Transaldolase of Prochlorococcus marinus (strain MIT 9313).